The sequence spans 466 residues: MATIPGGGTIMDPMHLYRARRDKERRGVLKTYKILGFISSGTYGRVYKAVLLPPPKTASAKSALPSSTRAALSLPKDKLPSPSFTEDSDPLNNPEMCMRPGDRPAKRGDVFAIKKFKPDKEGDVLTYAGISQSGAREIMLNRELHHRNLVSLREVILEDKSIYMVFEYAEHDFLQIIHYHSQTARASIPPSTLRRLLHQLLCGVHFLHSNFVLHRDLKPANILVTSQGVVKIGDLGLARLWHKPLAQQGLYGGDKVVVTIWYRAPELILGAKHYTAAVDIWAVGCIYAELLSLRPIFKGDEAKMDGKKSLPFQRDQMGKICEVLGPVKPEQWPGIVHMPEYRTYQATGPYPHSNPLAPWYHARSNSSEGYDILVKMFEWDPARRITARDALRHPWFQEEGGVDTKSVFEGSSITYPTRRVTHEDNGDAKMGSLPQSMAGGRLPSSSNFRPASGNIVQPAARKKARI.

Positions 32 to 396 constitute a Protein kinase domain; it reads YKILGFISSG…ARDALRHPWF (365 aa). Position 38-46 (38-46) interacts with ATP; sequence ISSGTYGRV. Positions 58 to 105 are disordered; sequence ASAKSALPSSTRAALSLPKDKLPSPSFTEDSDPLNNPEMCMRPGDRPA. Lysine 114 contributes to the ATP binding site. The Proton acceptor role is filled by aspartate 216. A disordered region spans residues 421–466; that stretch reads THEDNGDAKMGSLPQSMAGGRLPSSSNFRPASGNIVQPAARKKARI.

This sequence belongs to the protein kinase superfamily. CMGC Ser/Thr protein kinase family. CDC2/CDKX subfamily. In terms of assembly, component of the SRB8-11 complex, a regulatory module of the Mediator complex. The cofactor is Mg(2+).

It localises to the nucleus. It catalyses the reaction L-seryl-[protein] + ATP = O-phospho-L-seryl-[protein] + ADP + H(+). The catalysed reaction is L-threonyl-[protein] + ATP = O-phospho-L-threonyl-[protein] + ADP + H(+). The enzyme catalyses [DNA-directed RNA polymerase] + ATP = phospho-[DNA-directed RNA polymerase] + ADP + H(+). Component of the SRB8-11 complex. The SRB8-11 complex is a regulatory module of the Mediator complex which is itself involved in regulation of basal and activated RNA polymerase II-dependent transcription. The SRB8-11 complex may be involved in the transcriptional repression of a subset of genes regulated by Mediator. It may inhibit the association of the Mediator complex with RNA polymerase II to form the holoenzyme complex. The SRB8-11 complex phosphorylates the C-terminal domain (CTD) of the largest subunit of RNA polymerase II. The chain is Serine/threonine-protein kinase SSN3 (SSN3) from Cryptococcus neoformans var. neoformans serotype D (strain B-3501A) (Filobasidiella neoformans).